The chain runs to 156 residues: Small ribosomal subunit protein uS7 (156 aa).

This sequence belongs to the universal ribosomal protein uS7 family. Part of the 30S ribosomal subunit. Contacts proteins S9 and S11.

Functionally, one of the primary rRNA binding proteins, it binds directly to 16S rRNA where it nucleates assembly of the head domain of the 30S subunit. Is located at the subunit interface close to the decoding center, probably blocks exit of the E-site tRNA. This Salinispora arenicola (strain CNS-205) protein is Small ribosomal subunit protein uS7.